Consider the following 91-residue polypeptide: Acylphosphatase (91 aa).

The Acylphosphatase-like domain occupies 5–91 (CLHAYVGGRV…QGIAGFVVRR (87 aa)). Active-site residues include Arg-20 and Asn-38.

This sequence belongs to the acylphosphatase family.

The enzyme catalyses an acyl phosphate + H2O = a carboxylate + phosphate + H(+). The chain is Acylphosphatase (acyP) from Pseudomonas aeruginosa (strain ATCC 15692 / DSM 22644 / CIP 104116 / JCM 14847 / LMG 12228 / 1C / PRS 101 / PAO1).